A 66-amino-acid chain; its full sequence is Large ribosomal subunit protein bL35 (66 aa).

Positions 1–15 are enriched in basic residues; it reads MPKMKTKSSAKKRFK. Positions 1-32 are disordered; sequence MPKMKTKSSAKKRFKMTATGKVRAGQAGKRHG.

It belongs to the bacterial ribosomal protein bL35 family.

The polypeptide is Large ribosomal subunit protein bL35 (Dinoroseobacter shibae (strain DSM 16493 / NCIMB 14021 / DFL 12)).